The sequence spans 860 residues: Nuclear cap-binding protein complex subunit 1 (860 aa).

The region spanning 36–271 is the MIF4G domain; sequence CKDMLPDIRT…SNVKNALAND (236 aa).

Belongs to the NCBP1 family. As to quaternary structure, component of the nuclear cap-binding complex (CBC).

The protein resides in the nucleus. Its function is as follows. Component of the cap-binding complex (CBC) involved in the nuclear export of capped U snRNAs. The CBC complex is required for efficient pre-mRNA splicing through efficient commitment complex and spliceosome formation; and involved in rRNA processing at sites A0, A1 and A2. This chain is Nuclear cap-binding protein complex subunit 1 (CBC1), found in Eremothecium gossypii (strain ATCC 10895 / CBS 109.51 / FGSC 9923 / NRRL Y-1056) (Yeast).